Reading from the N-terminus, the 75-residue chain is Veswaprin-c (75 aa).

A signal peptide spans 1-24; that stretch reads MSSGGLLLLLGLLTLWAELTPVSS. The WAP domain occupies 27-72; that stretch reads RPKKPGLCPPRPQKPPCVRECKNDWRCPGERKCCRYGCIYECRDPI. Cystine bridges form between Cys34/Cys60, Cys43/Cys64, Cys47/Cys59, and Cys53/Cys68.

The protein belongs to the venom waprin family. Expressed by the venom gland.

Its subcellular location is the secreted. Functionally, damages membranes of susceptible bacteria. Has no hemolytic activity. Not toxic to mice. Does not inhibit the proteinases elastase and cathepsin G. The chain is Veswaprin-c from Demansia vestigiata (Lesser black whip snake).